The primary structure comprises 433 residues: G2/mitotic-specific cyclin-B1 (433 aa).

A disordered region spans residues 19 to 47 (INMAGAKRVPTAPAATSKPGLRPRTALGD). The residue at position 73 (Lys73) is an N6-acetyllysine. Residues 93-116 (PVSEPVPEPEPEPEPEPVKEEKLS) are disordered. Position 126 is a phosphoserine; by CDK1 (Ser126). Position 128 is a phosphoserine (Ser128). Ser133 carries the phosphoserine; by PLK1 modification. The residue at position 147 (Ser147) is a Phosphoserine. Interaction with CDK2 stretches follow at residues 169–177 (EYVKDIYAY) and 258–261 (YEEM). Thr321 is modified (phosphothreonine).

The protein belongs to the cyclin family. Cyclin AB subfamily. Interacts with the CDC2 protein kinase to form a serine/threonine kinase holoenzyme complex also known as maturation promoting factor (MPF). The cyclin subunit imparts substrate specificity to the complex. Binds HEI10. Interacts with catalytically active RALBP1 and CDC2 during mitosis to form an endocytotic complex during interphase. Interacts with CCNF; interaction is required for nuclear localization. Interacts with CDK5RAP3. Interacts with RFPL4A and UBE2A. Interacts with INCA1. In terms of processing, ubiquitinated by the SCF(NIPA) complex during interphase, leading to its destruction. Deubiquitinated by USP22 during G2/M phase. Post-translationally, phosphorylated by PLK1 at Ser-133 on centrosomes during prophase: phosphorylation by PLK1 does not cause nuclear import. Phosphorylation at Ser-147 was also reported to be mediated by PLK1 but Ser-133 seems to be the primary phosphorylation site.

It is found in the cytoplasm. The protein resides in the nucleus. It localises to the cytoskeleton. The protein localises to the microtubule organizing center. Its subcellular location is the centrosome. Functionally, essential for the control of the cell cycle at the G2/M (mitosis) transition. This is G2/mitotic-specific cyclin-B1 (CCNB1) from Homo sapiens (Human).